A 186-amino-acid polypeptide reads, in one-letter code: ATP synthase subunit b 3 (186 aa).

Residues 5-25 (LLPALLTFSATPALAAKGPFF) traverse the membrane as a helical segment.

It belongs to the ATPase B chain family. In terms of assembly, F-type ATPases have 2 components, F(1) - the catalytic core - and F(0) - the membrane proton channel. F(1) has five subunits: alpha(3), beta(3), gamma(1), delta(1), epsilon(1). F(0) has three main subunits: a(1), b(2) and c(10-14). The alpha and beta chains form an alternating ring which encloses part of the gamma chain. F(1) is attached to F(0) by a central stalk formed by the gamma and epsilon chains, while a peripheral stalk is formed by the delta and b chains.

It localises to the cell inner membrane. Its function is as follows. F(1)F(0) ATP synthase produces ATP from ADP in the presence of a proton or sodium gradient. F-type ATPases consist of two structural domains, F(1) containing the extramembraneous catalytic core and F(0) containing the membrane proton channel, linked together by a central stalk and a peripheral stalk. During catalysis, ATP synthesis in the catalytic domain of F(1) is coupled via a rotary mechanism of the central stalk subunits to proton translocation. Functionally, component of the F(0) channel, it forms part of the peripheral stalk, linking F(1) to F(0). The sequence is that of ATP synthase subunit b 3 from Dinoroseobacter shibae (strain DSM 16493 / NCIMB 14021 / DFL 12).